The chain runs to 305 residues: MACILKRKPVLVVSFIALCILLLAMRLVNDATFPLLLNCFGQPKTKWIPLPYTFRQPLRTHYGYINVRTQEPLQLNCNHCAIVSNSGQMVGQKVGEEIDHASCIWRMNNAPTKGFEEDVGYMTMVRVVSHTSVPLLLKNPDYFFKEASRTIYVIWGPFRNMRKDGNGIVYNMLKKTVDAYPDAQIYVTTEQQMTHCDRVFKDETGKDRVQSGSYLSTGWFTFILAMDACYSIHVYGMINETYCKTEGYRKVPYHYYEQGKDECNEYLLHEHAPYGGHRFITEKKVFAKWAKKHRIVFTHPNWTLS.

Residues Met-1–Lys-8 are Cytoplasmic-facing. A helical; Signal-anchor for type II membrane protein transmembrane segment spans residues Pro-9–Val-28. Over Asn-29–Ser-305 the chain is Lumenal. Residues Cys-80 and Cys-229 are joined by a disulfide bond. N-linked (GlcNAc...) asparagine glycans are attached at residues Asn-239 and Asn-301.

This sequence belongs to the glycosyltransferase 29 family. In terms of tissue distribution, in adult tissues, high expression in brain, lung and heart and to a lesser extent in kidney, mammary gland, spleen, testis and thymus.

It is found in the golgi apparatus membrane. The catalysed reaction is an alpha-Neu5Ac-(2-&gt;3)-beta-D-Gal-(1-&gt;3)-D-GlcNAc derivative + CMP-N-acetyl-beta-neuraminate = an alpha-Neu5Ac-(2-&gt;3)-beta-D-Gal-(1-&gt;3)-[alpha-Neu5Ac-(2-&gt;6)]-D-GlcNAc derivative + CMP + H(+). The enzyme catalyses a ganglioside GM1b (d18:1(4E)) + CMP-N-acetyl-beta-neuraminate = a ganglioside GD1alpha (d18:1(4E)) + CMP + H(+). It catalyses the reaction a globoside MSGG + CMP-N-acetyl-beta-neuraminate = a globoside DSGG + CMP + H(+). It carries out the reaction 3-O-[alpha-Neu5Ac-(2-&gt;3)-beta-D-Gal-(1-&gt;3)-alpha-D-GalNAc]-L-Ser-[protein] + CMP-N-acetyl-beta-neuraminate = a 3-O-{alpha-Neu5Ac-(2-&gt;3)-beta-D-Gal-(1-&gt;3)-[alpha-Neu5Ac-(2-&gt;6)]-alpha-D-GalNAc}-L-seryl-[protein] + CMP + H(+). The catalysed reaction is 3-O-[alpha-Neu5Ac-(2-&gt;3)-beta-D-Gal-(1-&gt;3)-alpha-D-GalNAc]-L-Thr-[protein] + CMP-N-acetyl-beta-neuraminate = a 3-O-{alpha-Neu5Ac-(2-&gt;3)-beta-D-Gal-(1-&gt;3)-[alpha-Neu5Ac-(2-&gt;6)]-alpha-D-GalNAc}-L-threonyl-[protein] + CMP + H(+). Its pathway is protein modification; protein glycosylation. It functions in the pathway glycolipid biosynthesis. Its function is as follows. Transfers the sialyl group (N-acetyl-alpha-neuraminyl or NeuAc) from CMP-NeuAc to the GalNAc residue on the NeuAc-alpha-2,3-Gal-beta-1,3-GalNAc sequence of glycoproteins and glycolipids forming an alpha-2,6-linkage. Produces branched type disialyl structures by transfer of a sialyl group onto a GalNAc residue inside the backbone core chains. ST6GalNAcIII prefers glycolipids to glycoproteins, predominantly catalyzing the biosynthesis of ganglioside GD1alpha from GM1b. GD1alpha is a critical molecule in the communication and interaction between neuronal cells and their supportive cells, particularly in brain tissues, and functions as an adhesion molecule in the process of metastasis. Sialylation of glycoproteins or glycosphingolipids is very important in tumor development, neuronal development, nerve repair, immunological processes and regulation of hormone sensitivity. In Mus musculus (Mouse), this protein is Alpha-N-acetylgalactosaminide alpha-2,6-sialyltransferase 3 (St6galnac3).